The chain runs to 477 residues: Endogenous retrovirus group V member 1 Env polyprotein (477 aa).

Residues 1-21 (MTEKFLFLYLSLLPMPLLSQA) form the signal peptide. The Extracellular segment spans residues 22–321 (QWNENSLVSF…NTTQPRQKRA (300 aa)). An N-linked (GlcNAc...) asparagine glycan is attached at asparagine 68. Residues 322-342 (LGLILAGMGAAIGMIAPWGGF) traverse the membrane as a helical segment. Over 343-477 (TYHDVTLRNL…LLSPLWPLSL (135 aa)) the chain is Cytoplasmic.

It belongs to the gamma type-C retroviral envelope protein family. Expressed in placenta.

The protein localises to the membrane. This chain is Endogenous retrovirus group V member 1 Env polyprotein (ERVV-1), found in Homo sapiens (Human).